A 216-amino-acid polypeptide reads, in one-letter code: Pyrrolidone-carboxylate peptidase (216 aa).

Residues Glu80, Cys143, and His167 contribute to the active site.

This sequence belongs to the peptidase C15 family. Homotetramer.

Its subcellular location is the cytoplasm. It carries out the reaction Release of an N-terminal pyroglutamyl group from a polypeptide, the second amino acid generally not being Pro.. Functionally, removes 5-oxoproline from various penultimate amino acid residues except L-proline. The sequence is that of Pyrrolidone-carboxylate peptidase (pcp) from Streptomyces coelicolor (strain ATCC BAA-471 / A3(2) / M145).